Here is a 217-residue protein sequence, read N- to C-terminus: Phosphatidylserine decarboxylase proenzyme (217 aa).

Ser187 acts as the Schiff-base intermediate with substrate; via pyruvic acid in catalysis. Residue Ser187 is modified to Pyruvic acid (Ser); by autocatalysis.

It belongs to the phosphatidylserine decarboxylase family. PSD-A subfamily. As to quaternary structure, heterodimer of a large membrane-associated beta subunit and a small pyruvoyl-containing alpha subunit. It depends on pyruvate as a cofactor. Post-translationally, is synthesized initially as an inactive proenzyme. Formation of the active enzyme involves a self-maturation process in which the active site pyruvoyl group is generated from an internal serine residue via an autocatalytic post-translational modification. Two non-identical subunits are generated from the proenzyme in this reaction, and the pyruvate is formed at the N-terminus of the alpha chain, which is derived from the carboxyl end of the proenzyme. The post-translation cleavage follows an unusual pathway, termed non-hydrolytic serinolysis, in which the side chain hydroxyl group of the serine supplies its oxygen atom to form the C-terminus of the beta chain, while the remainder of the serine residue undergoes an oxidative deamination to produce ammonia and the pyruvoyl prosthetic group on the alpha chain.

The protein localises to the cell membrane. It catalyses the reaction a 1,2-diacyl-sn-glycero-3-phospho-L-serine + H(+) = a 1,2-diacyl-sn-glycero-3-phosphoethanolamine + CO2. It functions in the pathway phospholipid metabolism; phosphatidylethanolamine biosynthesis; phosphatidylethanolamine from CDP-diacylglycerol: step 2/2. In terms of biological role, catalyzes the formation of phosphatidylethanolamine (PtdEtn) from phosphatidylserine (PtdSer). In Thermobifida fusca (strain YX), this protein is Phosphatidylserine decarboxylase proenzyme.